Reading from the N-terminus, the 257-residue chain is MGRAPCCEKMGLKKGPWTPEEDKVLVAHIQRHGHGNWRALPKQAGLLRCGKSCRLRWINYLRPDIKRGNFSKEEEDTIIHLHELLGNRWSAIAARLPGRTDNEIKNVWHTHLKKRLDAPAQGGHVAASGGKKHKKPKSAKKPAAAAAAPPASPERSASSSVTESSMASSVAEEHGNAGISSASASVCAKEESSFTSASEEFQIDDSFWSETLSMPLDGYDVSMEPGDAFVAPPSADDMDYWLGVFMESGEAQDLPQI.

2 consecutive HTH myb-type domains span residues 9–61 (KMGL…INYL) and 62–116 (RPDI…KKRL). DNA-binding regions (H-T-H motif) lie at residues 37-61 (WRAL…INYL) and 89-112 (WSAI…HTHL). The tract at residues 115 to 179 (RLDAPAQGGH…VAEEHGNAGI (65 aa)) is disordered. Residues 130-140 (GKKHKKPKSAK) are compositionally biased toward basic residues. Residues 141-170 (KPAAAAAAPPASPERSASSSVTESSMASSV) are compositionally biased toward low complexity.

It is found in the nucleus. Functionally, transcriptional activator involved in cold stress response. Regulates positively the expression of genes involved in reactive oxygen species (ROS) scavenging such as peroxidase and superoxide dismutase during cold stress. Transactivates a complex gene network that have major effects on stress tolerance and panicle development. The chain is Transcription factor MYB4 from Oryza sativa subsp. japonica (Rice).